Here is a 153-residue protein sequence, read N- to C-terminus: 3-hydroxyacyl-[acyl-carrier-protein] dehydratase FabZ (153 aa).

His-57 is a catalytic residue.

The protein belongs to the thioester dehydratase family. FabZ subfamily.

The protein resides in the cytoplasm. The catalysed reaction is a (3R)-hydroxyacyl-[ACP] = a (2E)-enoyl-[ACP] + H2O. In terms of biological role, involved in unsaturated fatty acids biosynthesis. Catalyzes the dehydration of short chain beta-hydroxyacyl-ACPs and long chain saturated and unsaturated beta-hydroxyacyl-ACPs. The sequence is that of 3-hydroxyacyl-[acyl-carrier-protein] dehydratase FabZ from Xanthomonas campestris pv. campestris (strain 8004).